The chain runs to 836 residues: Protein AKNAD1 (836 aa).

3 stretches are compositionally biased toward polar residues: residues Ser-159–Leu-172, Ser-181–Glu-192, and Ser-227–Lys-248. 2 disordered regions span residues Ser-159–Lys-248 and Leu-303–Glu-325. Over residues Cys-311–Ile-323 the composition is skewed to basic and acidic residues. Positions Gln-372–Lys-484 form a coiled coil. 2 disordered regions span residues Ser-510–Asn-545 and Met-575–Glu-596.

The protein belongs to the AKNA family.

The chain is Protein AKNAD1 (AKNAD1) from Homo sapiens (Human).